The following is a 360-amino-acid chain: Phospho-N-acetylmuramoyl-pentapeptide-transferase (360 aa).

Transmembrane regions (helical) follow at residues Tyr-21 to Gly-41, Thr-73 to Leu-93, Ala-94 to Val-114, Trp-132 to Gly-152, Ile-168 to Gly-188, Gly-199 to Thr-219, Val-239 to Tyr-259, Val-263 to Leu-283, Phe-288 to Val-308, and Val-338 to Lys-358.

This sequence belongs to the glycosyltransferase 4 family. MraY subfamily. Requires Mg(2+) as cofactor.

It localises to the cell inner membrane. The catalysed reaction is UDP-N-acetyl-alpha-D-muramoyl-L-alanyl-gamma-D-glutamyl-meso-2,6-diaminopimeloyl-D-alanyl-D-alanine + di-trans,octa-cis-undecaprenyl phosphate = di-trans,octa-cis-undecaprenyl diphospho-N-acetyl-alpha-D-muramoyl-L-alanyl-D-glutamyl-meso-2,6-diaminopimeloyl-D-alanyl-D-alanine + UMP. Its pathway is cell wall biogenesis; peptidoglycan biosynthesis. Its function is as follows. Catalyzes the initial step of the lipid cycle reactions in the biosynthesis of the cell wall peptidoglycan: transfers peptidoglycan precursor phospho-MurNAc-pentapeptide from UDP-MurNAc-pentapeptide onto the lipid carrier undecaprenyl phosphate, yielding undecaprenyl-pyrophosphoryl-MurNAc-pentapeptide, known as lipid I. This chain is Phospho-N-acetylmuramoyl-pentapeptide-transferase, found in Haemophilus influenzae (strain ATCC 51907 / DSM 11121 / KW20 / Rd).